We begin with the raw amino-acid sequence, 286 residues long: Thymidylate synthase (286 aa).

A dUMP-binding site is contributed by 140 to 141 (RR). Cys-161 functions as the Nucleophile in the catalytic mechanism. Residues 185–188 (RSND), Asn-196, and 226–228 (HIY) each bind dUMP. Position 188 (Asp-188) interacts with (6R)-5,10-methylene-5,6,7,8-tetrahydrofolate. Ala-285 provides a ligand contact to (6R)-5,10-methylene-5,6,7,8-tetrahydrofolate.

The protein belongs to the thymidylate synthase family. Bacterial-type ThyA subfamily. Homodimer.

The protein resides in the cytoplasm. It carries out the reaction dUMP + (6R)-5,10-methylene-5,6,7,8-tetrahydrofolate = 7,8-dihydrofolate + dTMP. The protein operates within pyrimidine metabolism; dTTP biosynthesis. Catalyzes the reductive methylation of 2'-deoxyuridine-5'-monophosphate (dUMP) to 2'-deoxythymidine-5'-monophosphate (dTMP) while utilizing 5,10-methylenetetrahydrofolate (mTHF) as the methyl donor and reductant in the reaction, yielding dihydrofolate (DHF) as a by-product. This enzymatic reaction provides an intracellular de novo source of dTMP, an essential precursor for DNA biosynthesis. This chain is Thymidylate synthase, found in Streptococcus thermophilus (strain ATCC BAA-491 / LMD-9).